Consider the following 435-residue polypeptide: MKFFLATLFASAVSSIAVDRLIPGAQIIPESDTRALLRVGGHHDKYHDRRTITIRPSRNDTDDVSRDFLWGIKHANHGGRLLLKKGEKYVIGRKLDLTFLDDIEVQLDGELKFTDDVSYWQENNFYYDFQKSITFWRWGGKDIKIFGTGLLNGNGQRWYNEFAGQEILDPDNEYYRPILFLTENATRISVEGITQLNSPCWTNFFIQSKDVSFDDVYIHAFSTNKSALPKNSDGFDSLNVDGLTVTNTRVDVGDDCFSPKPNTTNIFVQNLLCNNTHGVSMGSIGQYPGVMDIIEHAYIENVTLLNGQNGARLKAWAGQDVGYGRINNITYKNIRIENTDAPVVLDQCYFDIEAAECAQYPSQVNVTNILFENISGTSSGKNGKVVADLVCSPNAVCSDIQLKNINLTSPAGSPPEIICEGVQGDIGVECQASAD.

Positions 1 to 15 (MKFFLATLFASAVSS) are cleaved as a signal peptide. Residues Asn59, Asn184, and Asn224 are each glycosylated (N-linked (GlcNAc...) asparagine). PbH1 repeat units follow at residues 208-239 (SKDVSFDDVYIHAFSTNKSALPKNSDGFDSLN), 240-261 (VDGLTVTNTRVDVGDDCFSPKP), 262-283 (NTTNIFVQNLLCNNTHGVSMGS), 294-315 (IEHAYIENVTLLNGQNGARLKA), and 326-347 (INNITYKNIRIENTDAPVVLDQ). The active-site Proton donor is Asp254. A disulfide bridge links Cys256 with Cys273. N-linked (GlcNAc...) asparagine glycans are attached at residues Asn262 and Asn274. His277 is an active-site residue. N-linked (GlcNAc...) asparagine glycosylation is found at Asn301, Asn328, Asn365, and Asn373. A PbH1 6 repeat occupies 366 to 388 (VTNILFENISGTSSGKNGKVVAD). Cys391 and Cys397 are disulfide-bonded. The N-linked (GlcNAc...) asparagine glycan is linked to Asn406.

It belongs to the glycosyl hydrolase 28 family.

It localises to the secreted. The enzyme catalyses [(1-&gt;4)-alpha-D-galacturonosyl](n) + H2O = alpha-D-galacturonate + [(1-&gt;4)-alpha-D-galacturonosyl](n-1). Specific in hydrolyzing the terminal glycosidic bond of polygalacturonic acid and oligogalacturonates. The chain is Probable exopolygalacturonase B (pgxB) from Aspergillus oryzae (strain ATCC 42149 / RIB 40) (Yellow koji mold).